The chain runs to 236 residues: Small ribosomal subunit protein uS2c (236 aa).

It belongs to the universal ribosomal protein uS2 family.

The protein localises to the plastid. It is found in the chloroplast. In Guizotia abyssinica (Niger), this protein is Small ribosomal subunit protein uS2c (rps2).